The chain runs to 343 residues: Nod factor export ATP-binding protein I (343 aa).

The span at 1–14 (MQLLTRANVSSSPS) shows a compositional bias: polar residues. The segment at 1–38 (MQLLTRANVSSSPSRRPESNALKQKCHGHSNADNSLSR) is disordered. The ABC transporter domain occupies 45-275 (IELTNVSKSY…QIGCDVIEIY (231 aa)). 77–84 (GPNGAGKS) provides a ligand contact to ATP.

It belongs to the ABC transporter superfamily. Lipooligosaccharide exporter (TC 3.A.1.102) family. As to quaternary structure, the complex is composed of two ATP-binding proteins (NodI) and two transmembrane proteins (NodJ).

The protein localises to the cell inner membrane. Functionally, part of the ABC transporter complex NodIJ involved in the export of the nodulation factors (Nod factors), the bacterial signal molecules that induce symbiosis and subsequent nodulation induction. Nod factors are LCO (lipo-chitin oligosaccharide), a modified beta-1,4-linked N-acetylglucosamine oligosaccharide. This subunit is responsible for energy coupling to the transport system. In Sinorhizobium fredii (strain NBRC 101917 / NGR234), this protein is Nod factor export ATP-binding protein I.